The chain runs to 121 residues: MAKGLRCKHRIRMRNIKRQHYAKKDLERLKKIVSKSSELKDVVTMKTTEPIQENKTSEGTSTDGSMEVDKMAKVINKKTLQDENGHYPEWMNQRAVKKQKQKLNKLKIKKKSGKVSKAIKW.

2 disordered regions span residues 44 to 67 and 95 to 121; these read TMKT…GSME and AVKK…AIKW. The span at 45-64 shows a compositional bias: polar residues; it reads MKTTEPIQENKTSEGTSTDG.

This sequence belongs to the learning-associated protein family. Expressed predominantly in cerebral ganglia (at protein level). The mRNA is highly expressed in cerebral ganglia, and is detected at lower levels in visceral-pedal ganglia, head, and body, but is not detected in the tail.

The protein resides in the cytoplasm. The protein localises to the secreted. Functionally, may be involved in modulating long-term memory formation and retention, at least with respect to odor-taste associative learning. The protein is 18 kDa learning-associated protein of slug of Lehmannia marginata (Tree slug).